The primary structure comprises 451 residues: PTS system galactitol-specific EIIC component (451 aa).

In terms of domain architecture, PTS EIIC type-2 spans 6–435 (MRYILDLGPT…IYLTGIFMTW (430 aa)). The next 10 membrane-spanning stretches (helical) occupy residues 9–29 (ILDLGPTVMLPIVIIIFSKIL), 41–61 (LHIGIGFVGIGLVIGLMLDSI), 92–112 (ASQIALVAIPIAILVNVAMLL), 138–158 (LATGSWMIGMAGVVIHAAFVY), 218–238 (FGPFGEPVTVGFVMGLIIGIL), 305–325 (AVVSASLIFIPLTILIAVCVP), 329–349 (VLPFGDLATIGFFVAMAVAVH), 357–377 (LISGVIIMSITLWIATQTIGL), 392–412 (GMVASMDQGGSPITWLLIQVF), and 415–435 (QNIPGFIIIGAIYLTGIFMTW).

In terms of assembly, forms a complex with one each of subunit of GatA, GatB and 2 subunits of GatC.

The protein resides in the cell inner membrane. In terms of biological role, the phosphoenolpyruvate-dependent sugar phosphotransferase system (PTS), a major carbohydrate active transport system, catalyzes the phosphorylation of incoming sugar substrates concomitant with their translocation across the cell membrane. The enzyme II complex composed of GatA, GatB and GatC is involved in galactitol transport. The protein is PTS system galactitol-specific EIIC component (gatC) of Escherichia coli O157:H7.